The chain runs to 404 residues: Glucoside xylosyltransferase 1 (404 aa).

Topologically, residues methionine 1–arginine 6 are cytoplasmic. The helical; Signal-anchor for type II membrane protein transmembrane segment at valine 7–serine 29 threads the bilayer. Over leucine 30–arginine 404 the chain is Lumenal. N-linked (GlcNAc...) asparagine glycosylation is present at asparagine 201.

The protein belongs to the glycosyltransferase 8 family.

Its subcellular location is the membrane. The enzyme catalyses 3-O-(beta-D-glucosyl)-L-seryl-[EGF-like domain protein] + UDP-alpha-D-xylose = 3-O-[alpha-D-xylosyl-(1-&gt;3)-beta-D-glucosyl]-L-seryl-[EGF-like domain protein] + UDP + H(+). Its function is as follows. Glycosyltransferase which elongates the O-linked glucose attached to EGF-like repeats in the extracellular domain of Notch proteins by catalyzing the addition of xylose. The sequence is that of Glucoside xylosyltransferase 1 (Gxylt1) from Mus musculus (Mouse).